Reading from the N-terminus, the 51-residue chain is UPF0320 protein YOL166W-A (51 aa).

It belongs to the UPF0320 family.

The polypeptide is UPF0320 protein YOL166W-A (Saccharomyces cerevisiae (strain ATCC 204508 / S288c) (Baker's yeast)).